The primary structure comprises 455 residues: Phosphoglycerate kinase, glycosomal (455 aa).

V23, D24, F25, N26, R39, S61, H62, G64, R65, R132, H168, and R169 together coordinate (2R)-3-phosphoglycerate. Residues G214 and A215 each contribute to the ADP site. Position 214 (G214) interacts with CDP. AMP-binding residues include A215 and K216. A215 contacts ATP. A215 contributes to the Mg(2+) binding site. K216 lines the (2R)-3-phosphoglycerate pocket. D219 is a binding site for CDP. D219 is a Mg(2+) binding site. The ADP site is built by K220 and G238. Position 220 (K220) interacts with AMP. K220 provides a ligand contact to ATP. G238 contributes to the CDP binding site. Positions 239 and 311 each coordinate AMP. ATP contacts are provided by A239 and A311. ADP contacts are provided by A311 and N335. Positions 336 and 341 each coordinate CDP. Residues F341, E342, D374, and T375 each coordinate ADP. E342 is an AMP binding site. Residues E342, D374, and T375 each coordinate ATP. Residue D374 coordinates Mg(2+). The segment at 417–455 (DAKAPAAAAAAGGDCPCGSGCAAVPAAATATVSMVLASP) is topogenic signal.

It belongs to the phosphoglycerate kinase family. In terms of assembly, monomer. Mg(2+) is required as a cofactor.

It is found in the glycosome. The enzyme catalyses (2R)-3-phosphoglycerate + ATP = (2R)-3-phospho-glyceroyl phosphate + ADP. It participates in carbohydrate degradation; glycolysis; pyruvate from D-glyceraldehyde 3-phosphate: step 2/5. The chain is Phosphoglycerate kinase, glycosomal (PGKC) from Crithidia fasciculata.